The primary structure comprises 163 residues: Nucleotide-binding protein YPDSF_2805 (163 aa).

The protein belongs to the YajQ family.

Functionally, nucleotide-binding protein. This is Nucleotide-binding protein YPDSF_2805 from Yersinia pestis (strain Pestoides F).